Reading from the N-terminus, the 723-residue chain is Zinc finger CCCH domain-containing protein 11A (723 aa).

3 consecutive C3H1-type zinc fingers follow at residues S2 to A29, L31 to I57, and K60 to G87. Disordered stretches follow at residues E142–D208, K223–N256, K404–E428, E450–L526, and V565–S681. The span at A160 to E175 shows a compositional bias: acidic residues. Residues K376–K411 are a coiled coil. The span at P511–Q522 shows a compositional bias: polar residues. Residues K609–P620 show a composition bias toward low complexity. The segment covering L637–E649 has biased composition (polar residues). Residues Q650 to S672 show a composition bias toward low complexity.

It localises to the nucleus speckle. Its function is as follows. Through its association with TREX complex components, may participate in the export and post-transcriptional coordination of selected mRNA transcripts. Binds RNA. The polypeptide is Zinc finger CCCH domain-containing protein 11A (ZC3H11A) (Gallus gallus (Chicken)).